We begin with the raw amino-acid sequence, 176 residues long: Interleukin-20 (176 aa).

Residues 1–24 (MKGFGLAFGLFSAVGFLLWTPLTG) form the signal peptide. Disulfide bonds link cysteine 33-cysteine 126, cysteine 80-cysteine 132, and cysteine 81-cysteine 134.

It belongs to the IL-10 family. Forms a 1:1:1 heterotrimeric complex with its primary high-affinity heterodimeric receptor IL20RA/IL20RB.

It is found in the secreted. In terms of biological role, pro-inflammatory and angiogenic cytokine mainly secreted by monocytes and skin keratinocytes that plays crucial roles in immune responses, regulation of inflammatory responses, hemopoiesis, as well as epidermal cell and keratinocyte differentiation. Enhances tissue remodeling and wound-healing activities and restores the homeostasis of epithelial layers during infection and inflammatory responses to maintain tissue integrity. Affects multiple actin-mediated functions in activated neutrophils leading to inhibition of phagocytosis, granule exocytosis, and migration. Exert its effects via the type I IL-20 receptor complex consisting of IL20RA and IL20RB. Alternatively, can mediate its activity through a second receptor complex called type II IL-20 receptor complex composed of IL22RA1 and IL20RB. Acts as an arteriogenic and vascular remodeling factory by activating a range of signaling processes including phosphorylations of JAK2 and STAT5 as well as activation of the serine and threonine kinases AKT and ERK1/2. Alternatively, can activate STAT3 phosphorylation and transcriptional activity in a JAK2, ERK1/2 and p38 MAPK-dependent manner in keratinocytes. In Mus musculus (Mouse), this protein is Interleukin-20 (Il20).